Consider the following 62-residue polypeptide: Large ribosomal subunit protein eL24 (62 aa).

Zn(2+) contacts are provided by C6, C9, C32, and C36. Residues 6 to 36 form a C4-type zinc finger; sequence CYFCGKMLEPGTGKLYVKKDGSTYFMCSSKC.

The protein belongs to the eukaryotic ribosomal protein eL24 family. In terms of assembly, part of the 50S ribosomal subunit. Forms a cluster with proteins L3 and L14. Requires Zn(2+) as cofactor.

Functionally, binds to the 23S rRNA. The protein is Large ribosomal subunit protein eL24 of Methanosarcina acetivorans (strain ATCC 35395 / DSM 2834 / JCM 12185 / C2A).